The primary structure comprises 700 residues: Dipeptidyl aminopeptidase 1 (700 aa).

Positions 1–27 (MAKRIFSVSFLLVLLNVLHICIKFSVA) are cleaved as a signal peptide. N-linked (GlcNAc...) asparagine glycosylation is found at Asn52, Asn144, Asn265, Asn337, and Asn373. Positions 210–369 (DNVNEIKHLD…SPKRELEINE (160 aa)) are excised as a propeptide. Intrachain disulfides connect Cys395/Cys446 and Cys439/Cys478. Cys398 is an active-site residue. Residue Thr416 is modified to Sulfothreonine. Phe450 and Tyr452 together coordinate chloride. Residues Asn481, Asn490, and Asn507 are each glycosylated (N-linked (GlcNAc...) asparagine). Position 549 (Tyr549) interacts with chloride. N-linked (GlcNAc...) asparagine glycosylation is present at Asn615. Residues His624 and Asn648 contribute to the active site. An N-linked (GlcNAc...) asparagine glycan is attached at Asn667.

Belongs to the peptidase C1 family. In terms of assembly, monomer. It depends on chloride as a cofactor.

The protein resides in the vacuole lumen. It localises to the parasitophorous vacuole lumen. The enzyme catalyses Release of an N-terminal dipeptide, Xaa-Yaa-|-Zaa-, except when Xaa is Arg or Lys, or Yaa or Zaa is Pro.. Functionally, thiol protease that cleaves dipeptides from the N-terminus of protein substrates. Active against a broad range of dipeptide substrates composed of both polar and hydrophobic amino acids. Proline cannot occupy the P1 position and arginine or lysine cannot occupy the P2 position of the substrate. Involved in host hemoglobin degradation by generating dipeptides from hemoglobin-derived oligopeptides. This Plasmodium falciparum (isolate 3D7) protein is Dipeptidyl aminopeptidase 1.